The following is a 370-amino-acid chain: Probable G-protein coupled receptor 85 (370 aa).

Residues 1-25 (MANYSHAADNILQNLSPLTAFLKLT) lie on the Extracellular side of the membrane. N-linked (GlcNAc...) asparagine glycosylation is present at N3. Residues 26–46 (SLGFIIGVSVVGNLLISILLV) traverse the membrane as a helical segment. The Cytoplasmic portion of the chain corresponds to 47 to 57 (KDKTLHRAPYY). The helical transmembrane segment at 58–78 (FLLDLCCSDILRSAICFPFVF) threads the bilayer. Residues 79–96 (NSVKNGSTWTYGTLTCKV) are Extracellular-facing. The N-linked (GlcNAc...) asparagine glycan is linked to N83. A disulfide bridge connects residues C94 and C172. A helical transmembrane segment spans residues 97–117 (IAFLGVLSCFHTAFMLFCISV). At 118–137 (TRYLAIAHHRFYTKRLTFWT) the chain is on the cytoplasmic side. The helical transmembrane segment at 138–158 (CLAVICMVWTLSVAMAFPPVL) threads the bilayer. Residues 159–188 (DVGTYSFIREEDQCTFQHRSFRANDSLGFM) are Extracellular-facing. Residue N182 is glycosylated (N-linked (GlcNAc...) asparagine). Residues 189 to 209 (LLLALILLATQLVYLKLIFFV) traverse the membrane as a helical segment. Topologically, residues 210 to 286 (HDRRKMKPVQ…FKMEKRISRM (77 aa)) are cytoplasmic. The chain crosses the membrane as a helical span at residues 287 to 307 (FYIMTFLFLTLWGPYLVACYW). The Extracellular segment spans residues 308–313 (RVFARG). The helical transmembrane segment at 314-334 (PVVPGGFLTAAVWMSFAQAGI) threads the bilayer. Residues 335–370 (NPFVCIFSNRELRRCFSTTLLYCRKSRLPREPYCVI) are Cytoplasmic-facing.

Belongs to the G-protein coupled receptor 1 family. Interacts with DLG4 and DLG3. In terms of tissue distribution, highly expressed in brain and testis. Lower levels in small intestine, placenta and spleen. In brain regions, detected in all regions tested, but somewhat lower levels in the corpus callosum, medulla and spinal cord.

It localises to the cell membrane. It is found in the endoplasmic reticulum. Orphan receptor. This is Probable G-protein coupled receptor 85 (GPR85) from Homo sapiens (Human).